Here is a 170-residue protein sequence, read N- to C-terminus: Cathelicidin antimicrobial peptide (170 aa).

Positions 1-30 (MKTQMDGHSLGRWSLVLLLLGLVMPLAIVA) are cleaved as a signal peptide. Residues 31–131 (QVLSYKEAVL…DISCDKDNRR (101 aa)) constitute a propeptide, cathelin-like domain (CLD). 2 cysteine pairs are disulfide-bonded: Cys-86-Cys-97 and Cys-108-Cys-125. Residues 150 to 162 (FKRIVQRIKDFLR) form an active core region.

The protein belongs to the cathelicidin family. In terms of assembly, monomer, homodimer or homotrimer (in vitro). Oligomerizes as tetra- or hexamer in solution (in vitro). Proteolytically cleaved by proteinase PRTN3 into antibacterial peptide LL-37. Proteolytically cleaved by cathepsin CTSG and neutrophil elastase ELANE. In terms of processing, resistant to proteolytic degradation in solution, and when bound to both zwitterionic (mimicking mammalian membranes) and negatively charged membranes (mimicking bacterial membranes). Post-translationally, after secretion onto the skin surface, the CAMP gene product is processed by a serine protease-dependent mechanism into multiple novel antimicrobial peptides distinct from and shorter than cathelicidin LL-37. These peptides show enhanced antimicrobial action, acquiring the ability to kill skin pathogens such as S.aureus, E.coli and C.albicans. These peptides have lost the ability to stimulate CXCL8/IL8 release from keratinocytes. The peptides act synergistically, killing bacteria at lower concentrations when present together, and maintain activity at increased salt condition.

The protein localises to the secreted. The protein resides in the vesicle. Functionally, antimicrobial protein that is an integral component of the innate immune system. Binds to bacterial lipopolysaccharides (LPS). Acts via neutrophil N-formyl peptide receptors to enhance the release of CXCL2. Postsecretory processing generates multiple cathelicidin antimicrobial peptides with various lengths which act as a topical antimicrobial defense in sweat on skin. The unprocessed precursor form, cathelicidin antimicrobial peptide, inhibits the growth of Gram-negative E.coli and E.aerogenes with efficiencies comparable to that of the mature peptide LL-37 (in vitro). In terms of biological role, antimicrobial peptide that is an integral component of the innate immune system. Binds to bacterial lipopolysaccharides (LPS). Causes membrane permeabilization by forming transmembrane pores (in vitro). Causes lysis of E.coli. Exhibits antimicrobial activity against Gram-negative bacteria such as P.aeruginosa, S.typhimurium, E.aerogenes, E.coli and P.syringae, Gram-positive bacteria such as L.monocytogenes, S.epidermidis, S.pyogenes and S.aureus, as well as vancomycin-resistant enterococci (in vitro). Exhibits antimicrobial activity against methicillin-resistant S.aureus, P.mirabilis, and C.albicans in low-salt media, but not in media containing 100 mM NaCl (in vitro). Forms chiral supramolecular assemblies with quinolone signal (PQS) molecules of P.aeruginosa, which may lead to interference of bacterial quorum signaling and perturbance of bacterial biofilm formation. May form supramolecular fiber-like assemblies on bacterial membranes. Induces cytokine and chemokine producation as well as TNF/TNFA and CSF2/GMCSF production in normal human keratinocytes. Exhibits hemolytic activity against red blood cells. Exhibits antimicrobial activity against E.coli and B.megaterium (in vitro). In Pongo pygmaeus (Bornean orangutan), this protein is Cathelicidin antimicrobial peptide.